Here is a 568-residue protein sequence, read N- to C-terminus: Potassium-transporting ATPase potassium-binding subunit (568 aa).

The next 12 helical transmembrane spans lie at 7–27 (LLITSFLLILMLLAKPLGNII), 67–87 (YALAITIFNLTGLLLLFTLLV), 137–157 (GLTVQNFLSAATGIAVAFALI), 180–200 (LYLLLPLSMVIALVFVSQGVI), 258–278 (FIQILSIFLIPCALCFAFGQV), 288–308 (LLWAMSIIFVIATVGVMYAEL), 332–352 (FGILATSIYAVVTTAASCGAV), 361–381 (ALGGMIPMWLIQIGEVVFGGV), 384–404 (GLYGMLLFVLLTVFIAGLMIG), 421–441 (MVALAILVTPTLALLGTALTI), 488–508 (LLLAIILFLGRFGMILPVLAI), and 535–555 (LLILTIMLIGALTFIPALILG).

Belongs to the KdpA family. As to quaternary structure, the system is composed of three essential subunits: KdpA, KdpB and KdpC.

Its subcellular location is the cell inner membrane. Functionally, part of the high-affinity ATP-driven potassium transport (or Kdp) system, which catalyzes the hydrolysis of ATP coupled with the electrogenic transport of potassium into the cytoplasm. This subunit binds the periplasmic potassium ions and delivers the ions to the membrane domain of KdpB through an intramembrane tunnel. The protein is Potassium-transporting ATPase potassium-binding subunit of Photorhabdus laumondii subsp. laumondii (strain DSM 15139 / CIP 105565 / TT01) (Photorhabdus luminescens subsp. laumondii).